The chain runs to 126 residues: Fluoride-specific ion channel FluC (126 aa).

The next 3 helical transmembrane spans lie at 35–55, 71–91, and 101–121; these read WWTLSVNIVGSLAMGLLIGLL, VGMLGGFTTFSSFSMEFWLLF, and LYVVASVVGALLACGAGMILI. Na(+)-binding residues include glycine 75 and threonine 78.

Belongs to the fluoride channel Fluc/FEX (TC 1.A.43) family.

Its subcellular location is the cell inner membrane. It catalyses the reaction fluoride(in) = fluoride(out). With respect to regulation, na(+) is not transported, but it plays an essential structural role and its presence is essential for fluoride channel function. Fluoride-specific ion channel. Important for reducing fluoride concentration in the cell, thus reducing its toxicity. This chain is Fluoride-specific ion channel FluC, found in Sphingopyxis alaskensis (strain DSM 13593 / LMG 18877 / RB2256) (Sphingomonas alaskensis).